A 104-amino-acid chain; its full sequence is Translation initiation factor 1A (104 aa).

A compositionally biased stretch (low complexity) spans 1-14 (MRGQQTPPQQPTRV). Residues 1-20 (MRGQQTPPQQPTRVRTPREN) form a disordered region. Residues 12 to 87 (TRVRTPRENE…EKCDVIWRYT (76 aa)) form the S1-like domain.

It belongs to the eIF-1A family.

Seems to be required for maximal rate of protein biosynthesis. Enhances ribosome dissociation into subunits and stabilizes the binding of the initiator Met-tRNA(I) to 40 S ribosomal subunits. The polypeptide is Translation initiation factor 1A (Methanococcus maripaludis (strain DSM 14266 / JCM 13030 / NBRC 101832 / S2 / LL)).